Here is a 34-residue protein sequence, read N- to C-terminus: Kappa-theraphotoxin-Sc1a (34 aa).

Cystine bridges form between cysteine 2–cysteine 16, cysteine 9–cysteine 21, and cysteine 15–cysteine 28. Isoleucine 34 is modified (isoleucine amide).

Belongs to the neurotoxin 10 (Hwtx-1) family. 57 (ScTx1) subfamily. As to expression, expressed by the venom gland.

It is found in the secreted. In terms of biological role, acts as a gating-modifier to inhibit voltage-gated potassium channels. It inhibits delayed Kv2.1/KCNB1 (IC(50) is 12.7 nM), Kv2.1/Kv9.3 (IC(50) is 7.2 nM) (KCNB1/KCNS3), Kv2.2/KCNB2 (IC(50) is 21.4 nM), and transient Kv4.2/KCND2 (IC(50) is 1.2 nM) channels. This chain is Kappa-theraphotoxin-Sc1a, found in Stromatopelma calceatum (Featherleg baboon tarantula).